Here is a 530-residue protein sequence, read N- to C-terminus: NAD(+) kinase (530 aa).

Disordered stretches follow at residues 1–27 (MKENDMNNGVDKWVNEEDGRNDHHNNN), 57–99 (ISSE…KSSN), and 486–530 (SLEA…RFSV). The segment covering 13-25 (WVNEEDGRNDHHN) has biased composition (basic and acidic residues). A compositionally biased stretch (low complexity) spans 59 to 75 (SESSSRRSSLLNKDSSL). The span at 88 to 99 (INGTRGSSKSSN) shows a compositional bias: polar residues. Ser-499 and Ser-503 each carry phosphoserine. Positions 499–508 (SDDESDDESV) are enriched in acidic residues.

The protein belongs to the NAD kinase family. In terms of assembly, homohexamer.

The catalysed reaction is NAD(+) + ATP = ADP + NADP(+) + H(+). Specifically phosphorylates NAD in the presence of ATP, dATP, or CTP as phosphoryl donors. This is NAD(+) kinase (UTR1) from Saccharomyces cerevisiae (strain ATCC 204508 / S288c) (Baker's yeast).